Reading from the N-terminus, the 268-residue chain is uncharacterized protein (268 aa).

A run of 3 helical transmembrane segments spans residues 169-189, 190-210, and 225-245; these read AIIYVFMCLFFSLFWFYQGFA, GVKTSILTGTAEIGLAILWLL, and IFAGFACLGSEIFMWVLLSVF.

The protein resides in the cell membrane. This is an uncharacterized protein from Bacillus subtilis (strain 168).